The following is a 1032-amino-acid chain: Toll-like receptor 9 (1032 aa).

The first 25 residues, 1–25, serve as a signal peptide directing secretion; it reads MVLRRRTLHPLSLLVQAAVLAETLA. At 26 to 818 the chain is on the extracellular side; the sequence is LGTLPAFLPC…LCLDEVLSWD (793 aa). A disulfide bond links Cys35 and Cys45. Residue 47–51 participates in DNA binding; sequence WLFLK. 26 LRR repeats span residues 62–85, 87–110, 122–147, 150–166, 167–190, 198–221, 223–242, 243–268, 283–306, 308–332, 333–356, 363–386, 390–413, 415–440, 471–495, 497–520, 521–544, 546–573, 575–599, 601–623, 628–651, 653–676, 677–700, 702–724, 725–748, and 750–773; these read CSNI…DFVH, SNLR…HFSC, MRTL…SLVN, LSHT…LAGL, YSLR…AVKV, LSNL…LPPS, EYLL…DLAN, LTSL…CIEC, LSHL…WFQG, VNLS…AFQN, LTRL…RLHL, LVSL…TLRW, LPKL…IFGT, RALR…TPEE, CKNF…MFVN, SRLQ…QFLP, LTNL…SFSE, PQLQ…SFVT, LSML…LNSN, VRFL…LYLH, LSGL…NLDN, PKSL…SLSF, LPNL…TLPN, TLLQ…FFAL, AVEL…WFGP, and VMNL…AFVD. Asn64 carries N-linked (GlcNAc...) asparagine glycosylation. DNA-binding positions include 72–77 and 95–109; these read SNRIHH and KWNC…LHFS. A disulfide bond links Cys98 and Cys110. Asn129 is a glycosylation site (N-linked (GlcNAc...) asparagine). Tyr132 is a DNA binding site. Asn147 is a glycosylation site (N-linked (GlcNAc...) asparagine). Cys178 and Cys184 are joined by a disulfide. A DNA-binding site is contributed by 179 to 181; sequence YYK. A glycan (N-linked (GlcNAc...) asparagine) is linked at Asn200. Tyr208 contacts DNA. 2 N-linked (GlcNAc...) asparagine glycosylation sites follow: Asn210 and Asn242. Disulfide bonds link Cys255–Cys268 and Cys258–Cys265. S-palmitoyl cysteine attachment occurs at residues Cys258 and Cys265. 4 N-linked (GlcNAc...) asparagine glycosylation sites follow: Asn300, Asn309, Asn332, and Asn340. Residues 430–462 are disordered; the sequence is PSTLSEATPEEADDAEQEELLSADPHPAPLSTP. The span at 437-450 shows a compositional bias: acidic residues; the sequence is TPEEADDAEQEELL. Cys471 and Cys501 form a disulfide bridge. N-linked (GlcNAc...) asparagine glycans are attached at residues Asn495 and Asn514. N-linked (GlcNAc...) asparagine glycosylation occurs at Asn568. Residues Asn670, Asn695, and Asn700 are each glycosylated (N-linked (GlcNAc...) asparagine). Residues Asn732 and Asn752 are each glycosylated (N-linked (GlcNAc...) asparagine). 2 cysteine pairs are disulfide-bonded: Cys765/Cys791 and Cys767/Cys810. A helical transmembrane segment spans residues 819 to 839; sequence CFGLSLLAVAVGMVVPILHHL. Residues 840–1032 are Cytoplasmic-facing; sequence CGWDVWYCFH…QNFCRGPTAE (193 aa). The region spanning 868–1013 is the TIR domain; it reads LPYDAFVVFD…GFWAQLSTAL (146 aa).

It belongs to the Toll-like receptor family. Monomer and homodimer. Exists as a monomer in the absence of unmethylated cytidine-phosphate-guanosine (CpG) ligand. Proteolytic processing of an insertion loop (Z-loop) is required for homodimerization upon binding to the unmethylated CpG ligand leading to its activation. Interacts with MYD88 via their respective TIR domains. Interacts with BTK. Interacts (via transmembrane domain) with UNC93B1. Interacts with CD300LH; the interaction may promote full activation of TLR9-triggered innate responses. Interacts with CNPY3 and HSP90B1; this interaction is required for proper folding in the endoplasmic reticulum. Interacts with SMPDL3B. Interacts with CD82; this interaction is essential for TLR9-dependent myddosome formation in response to CpG stimulation. In terms of processing, activated by proteolytic cleavage of the flexible loop between repeats LRR14 and LRR15 within the ectodomain. Cleavage requires UNC93B1. Proteolytically processed by first removing the majority of the ectodomain by either asparagine endopeptidase (AEP) or a cathepsin followed by a trimming event that is solely cathepsin mediated and required for optimal receptor signaling. Post-translationally, palmitoylated by ZDHHC3 in the Golgi regulates TLR9 trafficking from the Golgi to endosomes. Depalmitoylation by PPT1 controls the release of TLR9 from UNC93B1 in endosomes. Expressed in the basolateral region of gastric epithelial cells with high levels detected in antrum and body mucosa (at protein level). Detected in spleen and stomach at higher levels in C57BL/6 mice than BALB/C.

The protein localises to the endoplasmic reticulum membrane. It is found in the endosome. Its subcellular location is the lysosome. The protein resides in the cytoplasmic vesicle. It localises to the phagosome. Key component of innate and adaptive immunity. TLRs (Toll-like receptors) control host immune response against pathogens through recognition of molecular patterns specific to microorganisms. TLR9 is a nucleotide-sensing TLR which is activated by unmethylated cytidine-phosphate-guanosine (CpG) dinucleotides. Acts via MYD88 and TRAF6, leading to NF-kappa-B activation, cytokine secretion and the inflammatory response. Plays a role in defense against systemic mouse cytomegalovirus infection. Controls lymphocyte response to Helicobacter infection. Upon CpG stimulation, induces B-cell proliferation, activation, survival and antibody production. In Mus musculus (Mouse), this protein is Toll-like receptor 9 (Tlr9).